We begin with the raw amino-acid sequence, 647 residues long: Meiotically up-regulated protein C8C9.04 (647 aa).

Disordered stretches follow at residues 1-241 (MTTN…ELKP) and 387-647 (RAQQ…KLFH). Positions 29 to 46 (KSTNAVEQNNNSSQASVT) are enriched in polar residues. The segment covering 49–67 (NKKKAAKRAKKKAAKKKKQ) has biased composition (basic residues). Over residues 92-103 (TILQEPGFTQTI) the composition is skewed to polar residues. Over residues 134-145 (PSASTSTAVPTT) the composition is skewed to low complexity. Over residues 146 to 155 (EARNTSITEP) the composition is skewed to polar residues. Low complexity predominate over residues 156–177 (ANSPSSSSSSASTKSTATTQSA). 2 positions are modified to phosphoserine: serine 162 and serine 165. At threonine 168 the chain carries Phosphothreonine. Residues 193 to 215 (QLGNSPASITSKPATTSAAQPSS) show a composition bias toward polar residues. Phosphoserine is present on residues serine 197 and serine 200. The span at 232–241 (AEKEIPELKP) shows a compositional bias: basic and acidic residues. Composition is skewed to polar residues over residues 390–406 (QPEQ…TETV), 413–432 (VSST…TESE), and 488–508 (PSST…AQSS). Serine 396 carries the post-translational modification Phosphoserine. Residues serine 489 and serine 490 each carry the phosphoserine modification. Threonine 491 carries the phosphothreonine modification. Phosphoserine occurs at positions 515, 519, and 523. Low complexity predominate over residues 518–530 (ASAPSSPGTTSAA). Over residues 561-589 (GSATTIPSPGSATTKPTPGSATTKPTPVS) the composition is skewed to polar residues. A compositionally biased stretch (low complexity) spans 596–613 (AGTTKPAPAAGATATAEN). Residues 633 to 647 (SWFKRMKKSFGKLFH) are compositionally biased toward basic residues.

In terms of biological role, has a role in meiosis and sporulation. This chain is Meiotically up-regulated protein C8C9.04, found in Schizosaccharomyces pombe (strain 972 / ATCC 24843) (Fission yeast).